We begin with the raw amino-acid sequence, 455 residues long: Glutamyl-tRNA reductase (455 aa).

Substrate-binding positions include 49–52 (TCNR), Ser109, 114–116 (ETQ), and Gln120. Cys50 acts as the Nucleophile in catalysis. 189–194 (GAGKMG) lines the NADP(+) pocket.

It belongs to the glutamyl-tRNA reductase family. In terms of assembly, homodimer.

It carries out the reaction (S)-4-amino-5-oxopentanoate + tRNA(Glu) + NADP(+) = L-glutamyl-tRNA(Glu) + NADPH + H(+). Its pathway is porphyrin-containing compound metabolism; protoporphyrin-IX biosynthesis; 5-aminolevulinate from L-glutamyl-tRNA(Glu): step 1/2. Its function is as follows. Catalyzes the NADPH-dependent reduction of glutamyl-tRNA(Glu) to glutamate 1-semialdehyde (GSA). The chain is Glutamyl-tRNA reductase from Bacillus subtilis (strain 168).